The chain runs to 346 residues: NADH-ubiquinone oxidoreductase chain 2 (346 aa).

Transmembrane regions (helical) follow at residues 25 to 45 (NLLL…PLLA), 56 to 76 (ATKY…VIIL), 94 to 114 (LLNM…FHYW), 122 to 142 (IPLH…LSIL), 148 to 168 (LLNP…GAWG), 178 to 198 (IMAY…PYNP), 200 to 220 (LTLL…ITLM), 240 to 260 (ILTM…LTGF), 278 to 298 (LSTL…RLIY), and 325 to 345 (FILP…SQLI).

This sequence belongs to the complex I subunit 2 family. In terms of assembly, core subunit of respiratory chain NADH dehydrogenase (Complex I) which is composed of 45 different subunits. Interacts with TMEM242.

Its subcellular location is the mitochondrion inner membrane. The catalysed reaction is a ubiquinone + NADH + 5 H(+)(in) = a ubiquinol + NAD(+) + 4 H(+)(out). In terms of biological role, core subunit of the mitochondrial membrane respiratory chain NADH dehydrogenase (Complex I) which catalyzes electron transfer from NADH through the respiratory chain, using ubiquinone as an electron acceptor. Essential for the catalytic activity and assembly of complex I. The polypeptide is NADH-ubiquinone oxidoreductase chain 2 (Rattus norvegicus (Rat)).